The chain runs to 84 residues: Large ribosomal subunit protein bL27 (84 aa).

Positions 1 to 21 (MAHKKGGGSTKNGRDSNPKYL) are disordered.

It belongs to the bacterial ribosomal protein bL27 family.

The polypeptide is Large ribosomal subunit protein bL27 (Chlorobium phaeovibrioides (strain DSM 265 / 1930) (Prosthecochloris vibrioformis (strain DSM 265))).